Here is a 221-residue protein sequence, read N- to C-terminus: MSKLFQARFATTVNDTHCLPATPLREVAFAGRSNAGKSSALNVLCNQKRLAFASKTPGRTQHINYFGIFAKDDLLAYLVDLPGYGYAAVNHETKYHWNALLSDYLQEREQLVGMVLIVDARRGITELDEQMIQWFVPTGKPIHILLSKCDKLNKSECKHALEDVRKQLQQYDPALPDGTGESQQLTAQLFSSTKRIGLEEADNLIIKWLFEAETHEDEITS.

Residues proline 23–glutamate 211 form the EngB-type G domain. Mg(2+)-binding residues include serine 38 and threonine 60.

This sequence belongs to the TRAFAC class TrmE-Era-EngA-EngB-Septin-like GTPase superfamily. EngB GTPase family. Mg(2+) serves as cofactor.

Functionally, necessary for normal cell division and for the maintenance of normal septation. This Polynucleobacter asymbioticus (strain DSM 18221 / CIP 109841 / QLW-P1DMWA-1) (Polynucleobacter necessarius subsp. asymbioticus) protein is Probable GTP-binding protein EngB.